Reading from the N-terminus, the 582-residue chain is Potassium-transporting ATPase potassium-binding subunit (582 aa).

11 consecutive transmembrane segments (helical) span residues 6–26 (LVQLLFFLSVLLVLSWPLGLY), 65–85 (IYALVMLGLNAFGMVFVYVLE), 87–107 (LQGGLPLNPLHLPGVDPFVAV), 136–156 (GLAVQNFLSAATGMAVAVALI), 178–198 (VLYILLPLSFVLALLLVWQGV), 277–297 (LEMLAILLIPAALCHTFGVMI), 304–324 (LAILAAMTILFAGFAALTLAA), 402–422 (GLYGMLVFAVVTVFVAGLMVG), 441–461 (ALVILIPPFLCLAGTALAAVI), 505–525 (IAGAVAMFVSRYWLIVPVLAL), and 546–566 (GGIFVALLIIVVLVVGALTFV).

This sequence belongs to the KdpA family. In terms of assembly, the system is composed of three essential subunits: KdpA, KdpB and KdpC.

The protein localises to the cell inner membrane. In terms of biological role, part of the high-affinity ATP-driven potassium transport (or Kdp) system, which catalyzes the hydrolysis of ATP coupled with the electrogenic transport of potassium into the cytoplasm. This subunit binds the periplasmic potassium ions and delivers the ions to the membrane domain of KdpB through an intramembrane tunnel. The chain is Potassium-transporting ATPase potassium-binding subunit from Solidesulfovibrio magneticus (strain ATCC 700980 / DSM 13731 / RS-1) (Desulfovibrio magneticus).